Reading from the N-terminus, the 399-residue chain is Elongation factor Tu (399 aa).

Residues 10-209 (KPHVNIGTIG…AVDSYIPTPT (200 aa)) enclose the tr-type G domain. A G1 region spans residues 19 to 26 (GHVDHGKT). 19–26 (GHVDHGKT) contributes to the GTP binding site. Thr-26 is a binding site for Mg(2+). Positions 60–64 (GITIA) are G2. A G3 region spans residues 81–84 (DCPG). GTP contacts are provided by residues 81 to 85 (DCPGH) and 136 to 139 (NKAD). Residues 136-139 (NKAD) form a G4 region. The G5 stretch occupies residues 174–176 (SAL).

This sequence belongs to the TRAFAC class translation factor GTPase superfamily. Classic translation factor GTPase family. EF-Tu/EF-1A subfamily. In terms of assembly, monomer.

Its subcellular location is the cytoplasm. The catalysed reaction is GTP + H2O = GDP + phosphate + H(+). In terms of biological role, GTP hydrolase that promotes the GTP-dependent binding of aminoacyl-tRNA to the A-site of ribosomes during protein biosynthesis. The protein is Elongation factor Tu of Campylobacter jejuni (strain RM1221).